Consider the following 175-residue polypeptide: Short chain dehydrogenase/reductase dpmpG (175 aa).

Positions 18, 71, 98, and 132 each coordinate NADP(+).

The protein belongs to the short-chain dehydrogenases/reductases (SDR) family.

It functions in the pathway secondary metabolite biosynthesis; terpenoid biosynthesis. Functionally, short chain dehydrogenase/reductase; part of the gene cluster that mediates the biosynthesis of diterpenoid pyrones. The first step of the pathway is the synthesis of the alpha-pyrone moiety by the polyketide synthase dpmpA via condensation of one acetyl-CoA starter unit with 3 malonyl-CoA units and 2 methylations. The alpha-pyrone is then combined with geranylgeranyl pyrophosphate (GGPP) formed by the GGPP synthase dpmpD through the action of the prenyltransferase dpmpC to yield a linear alpha-pyrone diterpenoid. Subsequent steps in the diterpenoid pyrone biosynthetic pathway involve the decalin core formation, which is initiated by the epoxidation of the C10-C11 olefin by the FAD-dependent oxidoreductase dpmpE, and is followed by a cyclization cascade catalyzed by the terpene cyclase dpmpB. The short chain dehydrogenase/reductase dpmpG then oxidizes the 8S hydroxy group to a ketone and the short chain dehydrogenase/reductase dpmpH reduces the ketone to the 8R hydroxy group to yield higginsianin B. Higginsianin B is further methylated by the methyltransferase dpmpI to produce the intermediate named FDDP B. The cytochrome P450 monooxygenase dpmpJ then oxidizes the C-26 methyl to primary alcohol, producing the final diterpenoid pyrone with a C-26 primary alcohol on the gamma-pyrone moiety named FDDP C. This is Short chain dehydrogenase/reductase dpmpG from Macrophomina phaseolina (strain MS6) (Charcoal rot fungus).